The primary structure comprises 308 residues: Malonyl CoA-acyl carrier protein transacylase (308 aa).

Residues serine 89 and histidine 199 contribute to the active site.

Belongs to the FabD family.

The enzyme catalyses holo-[ACP] + malonyl-CoA = malonyl-[ACP] + CoA. It functions in the pathway lipid metabolism; fatty acid biosynthesis. The polypeptide is Malonyl CoA-acyl carrier protein transacylase (fabD) (Staphylococcus aureus (strain Mu50 / ATCC 700699)).